The sequence spans 485 residues: Glutamate mutase epsilon subunit (485 aa).

An L-glutamate-binding site is contributed by arginine 100. Asparagine 123 provides a ligand contact to adenosylcob(III)alamin. L-glutamate-binding positions include 149–150 and aspartate 171; that span reads KH. Adenosylcob(III)alamin is bound by residues proline 180, phenylalanine 297, lysine 326, and glutamate 330.

It belongs to the methylaspartate mutase GlmE subunit family. In terms of assembly, heterotetramer composed of 2 epsilon subunits (GlmE) and 2 sigma subunits (GlmS). GlmE exists as a homodimer and GlmS as a monomer. Requires adenosylcob(III)alamin as cofactor.

It carries out the reaction (2S,3S)-3-methyl-L-aspartate = L-glutamate. Its pathway is amino-acid degradation; L-glutamate degradation via mesaconate pathway; acetate and pyruvate from L-glutamate: step 1/4. In terms of biological role, catalyzes the carbon skeleton rearrangement of L-glutamate to L-threo-3-methylaspartate ((2S,3S)-3-methylaspartate). This Fusobacterium nucleatum subsp. nucleatum (strain ATCC 25586 / DSM 15643 / BCRC 10681 / CIP 101130 / JCM 8532 / KCTC 2640 / LMG 13131 / VPI 4355) protein is Glutamate mutase epsilon subunit.